The chain runs to 143 residues: Oxoglutarate dehydrogenase inhibitor (143 aa).

Threonine 14 carries the phosphothreonine modification. The FHA domain occupies threonine 68 to arginine 117.

The protein localises to the cytoplasm. In terms of biological role, an essential component of the PknG signaling pathway. When unphosphorylated, it inhibits the activity of 2-oxoglutarate dehydrogenase. When phosphorylated it does not inhibit 2-oxoglutarate dehydrogenase. This chain is Oxoglutarate dehydrogenase inhibitor (odhI), found in Corynebacterium glutamicum (strain ATCC 13032 / DSM 20300 / JCM 1318 / BCRC 11384 / CCUG 27702 / LMG 3730 / NBRC 12168 / NCIMB 10025 / NRRL B-2784 / 534).